The sequence spans 102 residues: Large ribosomal subunit protein uL24 (102 aa).

This sequence belongs to the universal ribosomal protein uL24 family. As to quaternary structure, part of the 50S ribosomal subunit.

Functionally, one of two assembly initiator proteins, it binds directly to the 5'-end of the 23S rRNA, where it nucleates assembly of the 50S subunit. In terms of biological role, one of the proteins that surrounds the polypeptide exit tunnel on the outside of the subunit. In Alkaliphilus oremlandii (strain OhILAs) (Clostridium oremlandii (strain OhILAs)), this protein is Large ribosomal subunit protein uL24.